The primary structure comprises 335 residues: MMSIPMELMSIRNPNSTLLYRAHSRPPVKLCAPPRSLLPSRRHFSAPRAVVSYPGIRFGFTSPEVLLNRSVVAFAASHEDSGESGVEVGKEKSDIDVEDDTSKEAWKQTLESFKEQVSKMQSVSSEAYSVNSQKAMTVLKETSEQLRIQAEKAKEELGTKAKVVSEEGREYILKAAEESPSDVKEIVEAFASTEDLKNVSRANDFHVGIPYGLLLLVGGFINFMVSGSIPAIRFGVILGGALFALSLASLKSHRKGESSTKFLKGQMAIVAIIFLRELRLLLSQKSTFLGFFTTLTSGGVLGFYLYKMVVKREKGPTLEDGGEDESSDGFVRSEG.

The N-terminal 72 residues, 1–72 (MMSIPMELMS…PEVLLNRSVV (72 aa)), are a transit peptide targeting the chloroplast. Residues 82–101 (GESGVEVGKEKSDIDVEDDT) are disordered. Positions 88–101 (VGKEKSDIDVEDDT) are enriched in basic and acidic residues. The stretch at 101 to 160 (TSKEAWKQTLESFKEQVSKMQSVSSEAYSVNSQKAMTVLKETSEQLRIQAEKAKEELGTK) forms a coiled coil. Helical transmembrane passes span 205 to 225 (FHVGIPYGLLLLVGGFINFMV), 228 to 248 (SIPAIRFGVILGGALFALSLA), and 286 to 306 (STFLGFFTTLTSGGVLGFYLY). Residues 316-335 (PTLEDGGEDESSDGFVRSEG) are disordered.

The protein belongs to the TMEM14 family.

It is found in the plastid. The protein localises to the chloroplast membrane. Functionally, may be involved in free fatty acids export from the plastids. In Arabidopsis thaliana (Mouse-ear cress), this protein is Protein FATTY ACID EXPORT 3, chloroplastic.